The following is a 533-amino-acid chain: Zinc finger protein 692 (533 aa).

Disordered stretches follow at residues 124–251 and 290–310; these read SLIP…PATL and TESLDSPGSQAQSAPNPTCDE. Residues 149-178 show a composition bias toward basic and acidic residues; sequence EARRKQEAEGLECEHRERTQETRLSRRVEP. Over residues 190-208 the composition is skewed to acidic residues; it reads QVVEEEEEEEEEEEEEELL. Ser233 is subject to Phosphoserine. Residues 290 to 305 are compositionally biased toward polar residues; sequence TESLDSPGSQAQSAPN. 5 C2H2-type zinc fingers span residues 329-354, 360-384, 390-412, 418-440, and 449-472; these read MPCDFPGCGRIFSNRQYLNHHKKYQH, FCCPEPACGKSFNFKKHLKEHVKLH, YICEFCARSFRTSSNLVIHRRIH, LQCEICGFTCRQKASLNWHRRKH, and FPCEFCGKRFEKPDSVVAHCSKSH. At Ser471 the chain carries Phosphoserine. The disordered stretch occupies residues 478–533; the sequence is VQESPGSLGSSPSISAPEPLQSPEGTSFSTSYDSNPAPSTSISSPGVPAPRNTEKS. The segment covering 481–492 has biased composition (low complexity); it reads SPGSLGSSPSIS. Positions 500–521 are enriched in polar residues; sequence PEGTSFSTSYDSNPAPSTSISS.

The protein belongs to the krueppel C2H2-type zinc-finger protein family. Phosphorylation at Ser-471 results in loss of DNA-binding activity.

The protein resides in the nucleus. In terms of biological role, may act as an transcriptional repressor for PCK1 gene expression, in turns may participate in the hepatic gluconeogenesis regulation through the activated AMPK signaling pathway. This Rattus norvegicus (Rat) protein is Zinc finger protein 692.